The primary structure comprises 610 residues: UvrABC system protein C (610 aa).

The GIY-YIG domain occupies 13 to 91; that stretch reads HLPGVYRMYD…IKENQPKYNV (79 aa). The region spanning 201–236 is the UVR domain; sequence GQVIEHLVQKMENAAQELDFEAAARFRDQIQSVRAV.

The protein belongs to the UvrC family. In terms of assembly, interacts with UvrB in an incision complex.

The protein localises to the cytoplasm. Its function is as follows. The UvrABC repair system catalyzes the recognition and processing of DNA lesions. UvrC both incises the 5' and 3' sides of the lesion. The N-terminal half is responsible for the 3' incision and the C-terminal half is responsible for the 5' incision. This chain is UvrABC system protein C, found in Actinobacillus pleuropneumoniae serotype 3 (strain JL03).